The primary structure comprises 575 residues: MIIHNNINFIGLKLNILNPKQIIKWSSIFYKNKIIIGEVLIPNTINFNTGLPILNGLFCEKIFDYMYKWNCNCNKKMYNINNFSFFLYCKFCKNKLIININRKYKLGFIFLNIPILHLWYLTGPLKVASLLLNKNVFYLKFLIYYKYFFSNIKYKQYFYYNKLFSKINLYKKKYKNIIQYLFSHNILYKKLQNINLLTELLNNKELLLINNKYYNKKYLYKKINLFNLFILNNIKPNWIFLDLLPILPAGLRPYFYINNSTYIISTINENYRLIILKNNKLKYWLYLRNNIFFIFEIIEKRLLQQLIDYLLINKLILKNNNTFFNFSKTFQGKYSTIKYKLLGKRVDFSGRSVITVNPSIIYNNIGLPYYISINLFKPFLINILKYNSKLNIIFKSLLINKNLFIIQKFLNRLLQNQFIIINRAPTLHRMNLQSFKPLLTEGYSLKFYPLGCTSFNADFDGDQMSIFLPLIKTSKFESNINLNFDKNIISPSNNKNLFSNLQYYKLGINTLLILNYNNELNIFYFNSIEKIYEYYNNNILFIFNLVWIKYINNNNIFYILTSINRIIINLYMYIY.

The protein belongs to the RNA polymerase beta' chain family. In plastids the minimal PEP RNA polymerase catalytic core is composed of four subunits: alpha, beta, beta', and beta''. When a (nuclear-encoded) sigma factor is associated with the core the holoenzyme is formed, which can initiate transcription.

It localises to the plastid. The protein resides in the apicoplast. It carries out the reaction RNA(n) + a ribonucleoside 5'-triphosphate = RNA(n+1) + diphosphate. In terms of biological role, DNA-dependent RNA polymerase catalyzes the transcription of DNA into RNA using the four ribonucleoside triphosphates as substrates. This is DNA-directed RNA polymerase subunit beta' (rpoC1) from Plasmodium falciparum (isolate 3D7).